The following is a 116-amino-acid chain: Large ribosomal subunit protein bL17 (116 aa).

It belongs to the bacterial ribosomal protein bL17 family. In terms of assembly, part of the 50S ribosomal subunit. Contacts protein L32.

The sequence is that of Large ribosomal subunit protein bL17 from Synechococcus sp. (strain CC9902).